The chain runs to 220 residues: UPF0319 protein Ent638_1476 (220 aa).

Positions 1–20 (MKTGIVSAVLALVMPVCVYA) are cleaved as a signal peptide.

Belongs to the UPF0319 family.

This is UPF0319 protein Ent638_1476 from Enterobacter sp. (strain 638).